Consider the following 741-residue polypeptide: MNKELTPEQIKEQKVYLEWGLTQKEYEYICDKLLGRLPNYTETGLFSVMWSEHCSYKKSKPVLKLFPNKNERVLQGPGEGAGIVDIGDNQAVVFKAESHNHPSAVEPYEGAATGVGGILRDIFSMGARPIASLDSLHFGEIDNARTKYLINEVVAGIGGYGNCMGIPTVAGEITFDDCYAGNPLVNAMSVGILDQSHIQKGQAKGIGNAVMYVGAKTGRDGIHGATFASADFADDKETQRSAVQVGDPFMEKLLMEACIELTNNHQDWLVGIQDMGAAGIVSSSCEMSSKANSGMELNLDMVPQREEGMSAYEIMLSESQERMLLCVKKGHENDVKKLFEDYNLEAVVIGRVTEGHDYILHHKGEVVTNIPVSTLTDDVLEEPSEERVPQRILDNKNKDTWVPQLSSAKETLEALLQQPTIASKKMFTETYDSQVRTSTVVGPGSDAGVIRIRGTKKALAMTTDGNGRFIYLNPEVGGKIAVLEAATNIISSGALPLAITDCLNYGDPNDPEIYWELHQSINGMAEACRTLDTPVISGNVSLYNENNGEAIYPTAMIGMVGLIKDVYRTVPSFVQNTGDKLYLVGKTGNDFNGSELQKLLNNKITGDLNDFDLEKVNSYLKNLLVTMEQGLVSSSHDLSEGGLGVSLAEMVFGTDKGIKVSLDMKKELLFSETPGRLVVSVSKDNVAAFEEIMGEDITEIGEVQVDHQLDITLTDDNFVAEVSELEKLWEEAIPCLMKSKD.

Histidine 53 is a catalytic residue. 2 residues coordinate ATP: tyrosine 56 and lysine 95. Residue glutamate 97 coordinates Mg(2+). Substrate contacts are provided by residues 98–101 and arginine 120; that span reads SHNH. Histidine 99 functions as the Proton acceptor in the catalytic mechanism. Mg(2+) is bound at residue aspartate 121. Glutamine 244 contacts substrate. Aspartate 274 lines the Mg(2+) pocket. Substrate is bound at residue 318 to 320; the sequence is ESQ. Residues aspartate 501 and glycine 538 each contribute to the ATP site. Asparagine 539 serves as a coordination point for Mg(2+). Serine 541 provides a ligand contact to substrate.

It belongs to the FGAMS family. Monomer. Part of the FGAM synthase complex composed of 1 PurL, 1 PurQ and 2 PurS subunits.

Its subcellular location is the cytoplasm. The enzyme catalyses N(2)-formyl-N(1)-(5-phospho-beta-D-ribosyl)glycinamide + L-glutamine + ATP + H2O = 2-formamido-N(1)-(5-O-phospho-beta-D-ribosyl)acetamidine + L-glutamate + ADP + phosphate + H(+). It functions in the pathway purine metabolism; IMP biosynthesis via de novo pathway; 5-amino-1-(5-phospho-D-ribosyl)imidazole from N(2)-formyl-N(1)-(5-phospho-D-ribosyl)glycinamide: step 1/2. Part of the phosphoribosylformylglycinamidine synthase complex involved in the purines biosynthetic pathway. Catalyzes the ATP-dependent conversion of formylglycinamide ribonucleotide (FGAR) and glutamine to yield formylglycinamidine ribonucleotide (FGAM) and glutamate. The FGAM synthase complex is composed of three subunits. PurQ produces an ammonia molecule by converting glutamine to glutamate. PurL transfers the ammonia molecule to FGAR to form FGAM in an ATP-dependent manner. PurS interacts with PurQ and PurL and is thought to assist in the transfer of the ammonia molecule from PurQ to PurL. The polypeptide is Phosphoribosylformylglycinamidine synthase subunit PurL (Ligilactobacillus salivarius (strain UCC118) (Lactobacillus salivarius)).